Here is a 52-residue protein sequence, read N- to C-terminus: Insulin (52 aa).

3 cysteine pairs are disulfide-bonded: Cys7–Cys38, Cys19–Cys51, and Cys37–Cys42.

It belongs to the insulin family. As to quaternary structure, heterodimer of a B chain and an A chain linked by two disulfide bonds.

It localises to the secreted. Insulin decreases blood glucose concentration. It increases cell permeability to monosaccharides, amino acids and fatty acids. It accelerates glycolysis, the pentose phosphate cycle, and glycogen synthesis in liver. This chain is Insulin (ins), found in Amia calva (Bowfin).